Here is a 245-residue protein sequence, read N- to C-terminus: 1-(5-phosphoribosyl)-5-[(5-phosphoribosylamino)methylideneamino] imidazole-4-carboxamide isomerase (245 aa).

Residue aspartate 7 is the Proton acceptor of the active site. Aspartate 129 serves as the catalytic Proton donor.

It belongs to the HisA/HisF family.

Its subcellular location is the cytoplasm. The catalysed reaction is 1-(5-phospho-beta-D-ribosyl)-5-[(5-phospho-beta-D-ribosylamino)methylideneamino]imidazole-4-carboxamide = 5-[(5-phospho-1-deoxy-D-ribulos-1-ylimino)methylamino]-1-(5-phospho-beta-D-ribosyl)imidazole-4-carboxamide. It participates in amino-acid biosynthesis; L-histidine biosynthesis; L-histidine from 5-phospho-alpha-D-ribose 1-diphosphate: step 4/9. The chain is 1-(5-phosphoribosyl)-5-[(5-phosphoribosylamino)methylideneamino] imidazole-4-carboxamide isomerase from Shewanella baltica (strain OS195).